A 228-amino-acid polypeptide reads, in one-letter code: MKSTRPFHPTPVITIDGPTASGKGTVAALVAAHLGFHLLDSGALYRLAALASVRYGIAAEDIDALVKLIDDLHITFREGCAQLDGVDVSNDIRAEAVGNRASAIAVHGPVRSALVARQRAFRKTPGLVADGRDMGTVIFPDAVLKVFLTASAEARAARRHKQLMQKGFSANIDDLLRDLRERDARDSNRAAAPLKPAADAELLDTSALSVDEAVDQVLQWYRALGQPA.

An ATP-binding site is contributed by G17 to T25.

The protein belongs to the cytidylate kinase family. Type 1 subfamily.

The protein resides in the cytoplasm. The catalysed reaction is CMP + ATP = CDP + ADP. It catalyses the reaction dCMP + ATP = dCDP + ADP. This Burkholderia ambifaria (strain ATCC BAA-244 / DSM 16087 / CCUG 44356 / LMG 19182 / AMMD) (Burkholderia cepacia (strain AMMD)) protein is Cytidylate kinase.